Reading from the N-terminus, the 295-residue chain is UDP-N-acetylenolpyruvoylglucosamine reductase (295 aa).

Residues 24–188 (KVGGNAEIFF…LKAIFKANKG (165 aa)) enclose the FAD-binding PCMH-type domain. Residue R168 is part of the active site. S217 (proton donor) is an active-site residue. E287 is a catalytic residue.

Belongs to the MurB family. The cofactor is FAD.

The protein localises to the cytoplasm. It catalyses the reaction UDP-N-acetyl-alpha-D-muramate + NADP(+) = UDP-N-acetyl-3-O-(1-carboxyvinyl)-alpha-D-glucosamine + NADPH + H(+). Its pathway is cell wall biogenesis; peptidoglycan biosynthesis. Functionally, cell wall formation. The sequence is that of UDP-N-acetylenolpyruvoylglucosamine reductase from Rickettsia typhi (strain ATCC VR-144 / Wilmington).